A 102-amino-acid chain; its full sequence is Integration host factor subunit alpha (102 aa).

This sequence belongs to the bacterial histone-like protein family. Heterodimer of an alpha and a beta chain.

Its function is as follows. This protein is one of the two subunits of integration host factor, a specific DNA-binding protein that functions in genetic recombination as well as in transcriptional and translational control. The chain is Integration host factor subunit alpha from Chromohalobacter salexigens (strain ATCC BAA-138 / DSM 3043 / CIP 106854 / NCIMB 13768 / 1H11).